Reading from the N-terminus, the 503-residue chain is tRNA-guanine(15) transglycosylase (503 aa).

The active-site Nucleophile is the D86. D121 contributes to the substrate binding site. Residues C278, C280, and C283 each coordinate Zn(2+).

The protein belongs to the archaeosine tRNA-ribosyltransferase family. Zn(2+) is required as a cofactor.

It catalyses the reaction guanosine(15) in tRNA + 7-cyano-7-deazaguanine = 7-cyano-7-carbaguanosine(15) in tRNA + guanine. The protein operates within tRNA modification; archaeosine-tRNA biosynthesis. In terms of biological role, exchanges the guanine residue with 7-cyano-7-deazaguanine (preQ0) at position 15 in the dihydrouridine loop (D-loop) of archaeal tRNAs. This Saccharolobus solfataricus (strain ATCC 35092 / DSM 1617 / JCM 11322 / P2) (Sulfolobus solfataricus) protein is tRNA-guanine(15) transglycosylase.